The sequence spans 1499 residues: Condensin complex subunit 1 (1499 aa).

Disordered stretches follow at residues 1–43 (MPRK…DGLS) and 1421–1499 (ITKN…MLDD). Over residues 1432–1446 (PTTMSGSSRTTSRAA) the composition is skewed to low complexity. 2 stretches are compositionally biased toward acidic residues: residues 1458 to 1467 (SDEDDSDSDD) and 1486 to 1499 (ADDD…MLDD).

This sequence belongs to the CND1 (condensin subunit 1) family. Component of the condensin I complex, which contains the mix-1/SMC2 and smc-4/SMC4 heterodimer, and three non SMC subunits that probably regulate the complex: dpy-26, capg-1 and dpy-28. Within the complex, interacts with dpy-26 and smc-4. Component of the dosage compensation complex, which consist of the condensin I like components mix-1/SMC2 and dpy-27/SMC4, and the three non SMC subunits dpy-26, capg-1 and dpy-28. Within the complex, interacts with mix-1, dpy-27, dpy-26 and capg-1. Interacts with smcl-1. In terms of processing, sumoylated. Sumoylated in the context of the dosage compensation complex but not in the condensin I complex. Sumoylation is important for assembly of the dosage compensation complex and its robust binding to the X chromosome. Expressed in somatic and germline tissues (at protein level).

It localises to the nucleus. It is found in the chromosome. Required for both chromosome condensation and segregation during mitosis and meiosis and X-chromosome dosage compensation depending on its binding partners. Regulatory subunit of the condensin I complex, a complex required for conversion of interphase chromatin into mitotic-like condense chromosomes. The condensin I complex probably introduces positive supercoils into relaxed DNA in the presence of type I topoisomerases and converts nicked DNA into positive knotted forms in the presence of type II topoisomerases. The condensin I complex function is required for proper chromosome segregation in mitosis and meiosis. As a member of the condensin I complex, further controls the crossover number and distribution in meiosis by restricting double strand break formation, possibly by influencing higher-order chromosome structure. Plays a role in robust cytokinesis upon presence of chromatin obstructions. Also a member of the condensin I-like dosage compensation complex that associates specifically with hermaphrodite X chromosomes to reduce their gene transcription during interphase, possibly through chromatin reorganization. The chain is Condensin complex subunit 1 from Caenorhabditis elegans.